The following is a 381-amino-acid chain: Mannitol-1-phosphate 5-dehydrogenase (381 aa).

NAD(+) is bound at residue 3–14; sequence TLHFGAGNIGRG.

It belongs to the mannitol dehydrogenase family.

It carries out the reaction D-mannitol 1-phosphate + NAD(+) = beta-D-fructose 6-phosphate + NADH + H(+). This chain is Mannitol-1-phosphate 5-dehydrogenase, found in Aeromonas salmonicida (strain A449).